We begin with the raw amino-acid sequence, 472 residues long: 7-dimethylallyltryptophan synthase hasE (472 aa).

E138 provides a ligand contact to L-tryptophan. Dimethylallyl diphosphate is bound by residues R154, K239, Y241, K313, Y315, Y393, Y460, and Y464.

It belongs to the tryptophan dimethylallyltransferase family. Homodimer.

It carries out the reaction L-tryptophan + dimethylallyl diphosphate = 7-(3-methylbut-2-enyl)-L-tryptophan + diphosphate. It catalyses the reaction an N-terminal L-tryptophanyl-L-alpha-aminoacyl-[peptide] + H2O = an N-terminal L-alpha-aminoacyl-[peptide] + L-tryptophan. Its pathway is secondary metabolite biosynthesis. In terms of biological role, 7-dimethylallyltryptophan synthase; part of the gene cluster that mediates the biosynthesis of hexadehydro-astechrome (HAS), a tryptophan-derived iron(III)-complex that acts as a virulence factor in infected mice. Catalyzes the prenylation of L-tryptophan at the C-7 position of the indole moiety. The enzyme is specific for dimethylallyl diphosphate (DMAPP) as prenyl donor. Also accepts D-tryptophan, typtophan-derivatives with modifications at the side chain or the indole ring, and linear and cyclic dipeptides such as H-L-Trp-L-Gly-OH or cyclo-L-Trp-L-Gly as substrates, however with lower efficiency. Also has tryptophan aminopeptidase activity towards linear peptides with a tryptophanyl moiety at the N-terminus. Dipeptides are better substrates than peptides with 3 or more amino acids. Enzymatic rate constants however are much higher for the prenyltransferase activity than for the aminopeptidase activity. Within the hexadehydro-astechrome biosyntetic pathway, hasE catalyzes the prenylation of the hasD-tethered tryptophan or the resulting tethered Trp-Ala dipeptid. The HAS biosynthesis begins with the synthesis of a tethered Trp-Ala dipeptide by the NRPS hasD. The 7-dimethylallyltryptophan synthase hasE then catalyzes the prenylation of the hasD-tethered tryptophan or the resulting tethered Trp-Ala dipeptide at the C-7 position of the indole moiety. HAS biosynthesis continues via tethered intermediates with the succesive actions of the cytochrome P450 monooxygenase hasH, the O-methyltransferase hasC, and the FAD-linked oxidoreductase hasG. The resulting O-methylated diketopiperazine is then released from hasD. Finally, three O-methylated diketopiperazine molecules assemble in a trimeric complex with Fe(III) to produce hexadehydro-astechrome. This is 7-dimethylallyltryptophan synthase hasE from Aspergillus fumigatus (strain CBS 144.89 / FGSC A1163 / CEA10) (Neosartorya fumigata).